A 211-amino-acid polypeptide reads, in one-letter code: Large ribosomal subunit protein bL25 (211 aa).

A disordered region spans residues 175–211 (VSEPVEQDLGEESETEEEGAEGEKPAESTGEEPGDDE). Acidic residues predominate over residues 179–194 (VEQDLGEESETEEEGA).

The protein belongs to the bacterial ribosomal protein bL25 family. CTC subfamily. Part of the 50S ribosomal subunit; part of the 5S rRNA/L5/L18/L25 subcomplex. Contacts the 5S rRNA. Binds to the 5S rRNA independently of L5 and L18.

Its function is as follows. This is one of the proteins that binds to the 5S RNA in the ribosome where it forms part of the central protuberance. This is Large ribosomal subunit protein bL25 from Kocuria rhizophila (strain ATCC 9341 / DSM 348 / NBRC 103217 / DC2201).